Reading from the N-terminus, the 391-residue chain is Multidrug resistance protein MdtL (391 aa).

The next 12 membrane-spanning stretches (helical) occupy residues 4-24, 42-62, 69-89, 93-113, 134-154, 158-178, 203-222, 245-265, 269-289, 293-313, 331-351, and 356-376; these read FLICSFALVLLYPAGIDMYLV, IAFSVYLAGMAAAMLFAGKVA, PVAIPGAALFIIASVFCSLAE, LFLAGRFLQGLGAGCCYVVAF, GITCIIPVLAPVLGHLIMLNF, SLFWTMAIMGVAVLMLSLFIL, FFLSRVVITTLSVSVILTFV, ALTAGVSMTVSFSTPFALGIF, TLMITSQVLFLAAGITLAVSP, VSLFGITLICAGFSVGFGVAM, LGIAQVCGSSLWIWLAAVVGI, and MLIGILIACSIVSLLLIMFVA.

Belongs to the major facilitator superfamily. DHA1 family. MdtL (TC 2.A.1.2.22) subfamily.

Its subcellular location is the cell inner membrane. Confers resistance to chloramphenicol. In Escherichia coli O81 (strain ED1a), this protein is Multidrug resistance protein MdtL.